A 1710-amino-acid chain; its full sequence is Neurexin-2 (1710 aa).

Residues 1 to 28 form the signal peptide; that stretch reads MALGSRWQPPPQLPPLLLLLALAAGVRG. In terms of domain architecture, Laminin G-like 1 spans 29–206; sequence LEFGGGPGQW…LRGAAADPLC (178 aa). Topologically, residues 29-1634 are extracellular; sequence LEFGGGPGQW…EVIRESSSTT (1606 aa). A glycan (N-linked (GlcNAc...) asparagine) is linked at N60. The EGF-like 1 domain maps to 202-242; that stretch reads ADPLCAPARNPCANGGLCTVLAPGEVGCDCSHTGFGGKFCS. Cystine bridges form between C206–C219, C213–C229, and C231–C241. 2 Laminin G-like domains span residues 289 to 486 and 493 to 686; these read VATF…SFRC and DPVT…APFC. Position 335 (D335) interacts with Ca(2+). N-linked (GlcNAc...) asparagine glycosylation is present at N338. Ca(2+) contacts are provided by L352 and M420. 5 cysteine pairs are disulfide-bonded: C450-C486, C657-C686, C694-C705, C699-C714, and C716-C726. Positions 690–727 constitute an EGF-like 2 domain; it reads TLKQCASAPCRNGGICREGWNRFVCDCIGTGFLGRVCE. 2 Laminin G-like domains span residues 732–904 and 918–1093; these read VLSY…ITYC and DPVT…ERGC. The Ca(2+) site is built by D779 and L796. N841 is a glycosylation site (N-linked (GlcNAc...) asparagine). Position 854 (R854) interacts with Ca(2+). Disulfide bonds link C1065–C1093, C1100–C1111, C1105–C1120, and C1122–C1132. In terms of domain architecture, EGF-like 3 spans 1096–1133; it reads PSTTCTEESCANQGVCLQQWDGFTCDCTMTSYGGPVCN. The region spanning 1137 to 1345 is the Laminin G-like 6 domain; the sequence is TTYIFGKGGA…HLRLVGEGPS (209 aa). Ca(2+) contacts are provided by D1189, V1206, I1288, and N1290. An O-linked (Xyl...) (heparan sulfate) serine glycan is attached at S1400. Disordered regions lie at residues 1458-1508 and 1587-1621; these read ATQD…LPPT and EPRR…RGPP. A helical membrane pass occupies residues 1635-1655; sequence GMVVGIVAAAALCILILLYAM. The Cytoplasmic segment spans residues 1656 to 1710; the sequence is YKYRNRDEGSYQVDQSRNYISNSAQSNGAVVKEKAPAAPKTPSKAKKNKDKEYYV. Residues 1677 to 1710 are disordered; it reads NSAQSNGAVVKEKAPAAPKTPSKAKKNKDKEYYV.

The laminin G-like domain 1 binds to NXPH1. Interacts with PATJ. Interacts with CBLN1, CBLN2 and, less avidly, with CBLN4. Specific isoforms bind neuroligins NLGN1, NLGN2 and NLGN3. Specific isoforms bind to alpha-dystroglycan. Interacts (via Laminin G-like 1 domain) with IGSF21 (Ig-like 1 domain) in a trans-interaction manner. Interacts with CLSTN3. Post-translationally, O-glycosylated; contains heparan sulfate. Heparan sulfate attachment is required for synapse development by mediating interactions with neuroligins.

It is found in the presynaptic cell membrane. In terms of biological role, neuronal cell surface protein that may be involved in cell recognition and cell adhesion. May mediate intracellular signaling. The polypeptide is Neurexin-2 (Mus musculus (Mouse)).